Consider the following 166-residue polypeptide: Transcription antitermination protein NusB (166 aa).

The segment covering 1–18 (MISDESDRFNPRDPKPAD) has biased composition (basic and acidic residues). Positions 1-28 (MISDESDRFNPRDPKPADAGKPSKSAKR) are disordered.

The protein belongs to the NusB family.

Functionally, involved in transcription antitermination. Required for transcription of ribosomal RNA (rRNA) genes. Binds specifically to the boxA antiterminator sequence of the ribosomal RNA (rrn) operons. The chain is Transcription antitermination protein NusB from Pseudomonas putida (strain GB-1).